The chain runs to 87 residues: Putative BTB/POZ domain-containing protein At3g29740 (87 aa).

One can recognise a BTB domain in the interval 24–87; it reads VDVRLKAGDS…KHTELVALVE (64 aa).

It functions in the pathway protein modification; protein ubiquitination. May act as a substrate-specific adapter of an E3 ubiquitin-protein ligase complex (CUL3-RBX1-BTB) which mediates the ubiquitination and subsequent proteasomal degradation of target proteins. The sequence is that of Putative BTB/POZ domain-containing protein At3g29740 from Arabidopsis thaliana (Mouse-ear cress).